Consider the following 325-residue polypeptide: Glutarate 2-hydroxylase (325 aa).

Positions 160, 162, and 292 each coordinate Fe cation.

Belongs to the glutarate hydroxylase family. Homotetramer. It depends on Fe(2+) as a cofactor.

It carries out the reaction glutarate + 2-oxoglutarate + O2 = (S)-2-hydroxyglutarate + succinate + CO2. Its pathway is amino-acid degradation. Its function is as follows. Acts as an alpha-ketoglutarate-dependent dioxygenase catalyzing hydroxylation of glutarate (GA) to L-2-hydroxyglutarate (L2HG). Functions in a L-lysine degradation pathway that proceeds via cadaverine, glutarate and L-2-hydroxyglutarate. This Escherichia coli O6:K15:H31 (strain 536 / UPEC) protein is Glutarate 2-hydroxylase.